The following is a 66-amino-acid chain: Beta-defensin 107A (66 aa).

A signal peptide spans 1 to 22 (MKIFFFIFAALFLLAQIFQART). 2 cysteine pairs are disulfide-bonded: Cys37-Cys51 and Cys41-Cys60.

This sequence belongs to the beta-defensin family.

The protein localises to the secreted. Its function is as follows. Has antibacterial activity. This is Beta-defensin 107A (DEFB107A) from Gorilla gorilla gorilla (Western lowland gorilla).